The chain runs to 283 residues: Pantothenate synthetase (283 aa).

Position 34-41 (34-41 (MGALHDGH)) interacts with ATP. His41 acts as the Proton donor in catalysis. Gln65 contacts (R)-pantoate. Gln65 serves as a coordination point for beta-alanine. 152 to 155 (GSKD) contributes to the ATP binding site. Gln158 serves as a coordination point for (R)-pantoate. ATP contacts are provided by residues Ile181 and 189–192 (MSSR).

This sequence belongs to the pantothenate synthetase family. As to quaternary structure, homodimer.

It localises to the cytoplasm. It catalyses the reaction (R)-pantoate + beta-alanine + ATP = (R)-pantothenate + AMP + diphosphate + H(+). The protein operates within cofactor biosynthesis; (R)-pantothenate biosynthesis; (R)-pantothenate from (R)-pantoate and beta-alanine: step 1/1. In terms of biological role, catalyzes the condensation of pantoate with beta-alanine in an ATP-dependent reaction via a pantoyl-adenylate intermediate. This chain is Pantothenate synthetase, found in Rhodopseudomonas palustris (strain HaA2).